Consider the following 499-residue polypeptide: Probable cytosol aminopeptidase (499 aa).

Residues Lys263 and Asp268 each contribute to the Mn(2+) site. Lys275 is a catalytic residue. Residues Asp286, Asp345, and Glu347 each coordinate Mn(2+). The active site involves Arg349.

This sequence belongs to the peptidase M17 family. The cofactor is Mn(2+).

It is found in the cytoplasm. It carries out the reaction Release of an N-terminal amino acid, Xaa-|-Yaa-, in which Xaa is preferably Leu, but may be other amino acids including Pro although not Arg or Lys, and Yaa may be Pro. Amino acid amides and methyl esters are also readily hydrolyzed, but rates on arylamides are exceedingly low.. It catalyses the reaction Release of an N-terminal amino acid, preferentially leucine, but not glutamic or aspartic acids.. Presumably involved in the processing and regular turnover of intracellular proteins. Catalyzes the removal of unsubstituted N-terminal amino acids from various peptides. In Chlamydia muridarum (strain MoPn / Nigg), this protein is Probable cytosol aminopeptidase (pepA).